The primary structure comprises 285 residues: V-type proton ATPase subunit D (285 aa).

Basic and acidic residues predominate over residues 208–226; sequence QKTKENAEKADSVTKEEHQ. Residues 208-285 are disordered; sequence QKTKENAEKA…ENDSDEEVIF (78 aa). A Phosphoserine modification is found at S219. Over residues 227–236 the composition is skewed to polar residues; it reads GGSNTLQQTK. Residues 248-263 are compositionally biased toward basic and acidic residues; that stretch reads VGKEVINEVENSKDDT. Over residues 271–285 the composition is skewed to acidic residues; that stretch reads TDDEEENDSDEEVIF.

The protein belongs to the V-ATPase D subunit family. As to quaternary structure, V-ATPase is a heteromultimeric enzyme composed of a peripheral catalytic V1 complex (components A to H) attached to an integral membrane V0 proton pore complex (components: a, c, c', c'', d, e, f and VOA1).

It is found in the vacuole membrane. Its function is as follows. Subunit of the V1 complex of vacuolar(H+)-ATPase (V-ATPase), a multisubunit enzyme composed of a peripheral complex (V1) that hydrolyzes ATP and a membrane integral complex (V0) that translocates protons. V-ATPase is responsible for acidifying and maintaining the pH of intracellular compartments. The polypeptide is V-type proton ATPase subunit D (vma8) (Schizosaccharomyces pombe (strain 972 / ATCC 24843) (Fission yeast)).